The following is a 444-amino-acid chain: MSETSQTIPELVSWAREREFSLSLNTERLSYLLAIALYNNERFDGEMQESDLVDIFRHVSKEFDQSDNITTRANNAINDLVKQRFINRFSSEFTDGLSIYRLTPLGVGVSDYYIRQREFSALRLSVQLAIVADEIQRASESAEEAVRRGEDEYYWRRNVFAPLKYSVAEIFDSIDLSQRIMDENQQSIKEEIAELLTKDWQAAIASCERLLDETSGNLRELQDTLNAAGDKLQAQLLRIQDCVMGRNELYFIDQLIVDLQSKLDRIISWGQQAIDLWIGYDRHVHKFIRTAIDMDKNRVFSQRLRQSIHHYFDAPWFLWTAQAERLVDLRDEELTLRDEDALGELPEALEYEQLSDLHDQIVEAMQALLINHREHNQPIDLSLVLKQQLDNYPLSRHFDVARVIVDQAVRLGMASADLSGVYSQWHEINDYGAEVQANVIDEYK.

The leucine-zipper stretch occupies residues 211–239; sequence LDETSGNLRELQDTLNAAGDKLQAQLLRI.

Belongs to the MukF family. In terms of assembly, interacts, and probably forms a ternary complex, with MukE and MukB via its C-terminal region. The complex formation is stimulated by calcium or magnesium. It is required for an interaction between MukE and MukB.

It localises to the cytoplasm. The protein localises to the nucleoid. Its function is as follows. Involved in chromosome condensation, segregation and cell cycle progression. May participate in facilitating chromosome segregation by condensation DNA from both sides of a centrally located replisome during cell division. Not required for mini-F plasmid partitioning. Probably acts via its interaction with MukB and MukE. Overexpression results in anucleate cells. It has a calcium binding activity. This Actinobacillus succinogenes (strain ATCC 55618 / DSM 22257 / CCUG 43843 / 130Z) protein is Chromosome partition protein MukF.